Consider the following 219-residue polypeptide: UPF0502 protein GSU0233 (219 aa).

The protein belongs to the UPF0502 family.

This chain is UPF0502 protein GSU0233, found in Geobacter sulfurreducens (strain ATCC 51573 / DSM 12127 / PCA).